The sequence spans 258 residues: Phosphoadenosine 5'-phosphosulfate reductase (258 aa).

Cysteine 244 serves as the catalytic Nucleophile; cysteine thiosulfonate intermediate.

The protein belongs to the PAPS reductase family. CysH subfamily.

It is found in the cytoplasm. The catalysed reaction is [thioredoxin]-disulfide + sulfite + adenosine 3',5'-bisphosphate + 2 H(+) = [thioredoxin]-dithiol + 3'-phosphoadenylyl sulfate. The protein operates within sulfur metabolism; hydrogen sulfide biosynthesis; sulfite from sulfate: step 3/3. In terms of biological role, catalyzes the formation of sulfite from phosphoadenosine 5'-phosphosulfate (PAPS) using thioredoxin as an electron donor. This is Phosphoadenosine 5'-phosphosulfate reductase from Vibrio vulnificus (strain YJ016).